We begin with the raw amino-acid sequence, 227 residues long: Mediator of RNA polymerase II transcription subunit 18 (227 aa).

This sequence belongs to the Mediator complex subunit 18 family. As to quaternary structure, component of the Mediator complex.

Its subcellular location is the nucleus. In terms of biological role, component of the Mediator complex, a coactivator involved in the regulated transcription of nearly all RNA polymerase II-dependent genes. Mediator functions as a bridge to convey information from gene-specific regulatory proteins to the basal RNA polymerase II transcription machinery. Mediator is recruited to promoters by direct interactions with regulatory proteins and serves as a scaffold for the assembly of a functional preinitiation complex with RNA polymerase II and the general transcription factors. This is Mediator of RNA polymerase II transcription subunit 18 (mdt-18) from Caenorhabditis briggsae.